The following is a 439-amino-acid chain: Xaa-Pro dipeptidase (439 aa).

Residues Asp244, Asp255, His335, Glu380, and Glu419 each contribute to the Mn(2+) site.

It belongs to the peptidase M24B family. Bacterial-type prolidase subfamily. Mn(2+) is required as a cofactor.

It carries out the reaction Xaa-L-Pro dipeptide + H2O = an L-alpha-amino acid + L-proline. Functionally, splits dipeptides with a prolyl residue in the C-terminal position. This is Xaa-Pro dipeptidase from Shewanella sediminis (strain HAW-EB3).